The following is a 258-amino-acid chain: Shikimate dehydrogenase (NADP(+)) (258 aa).

Shikimate-binding positions include 14 to 16 (SES) and Thr61. Lys65 serves as the catalytic Proton acceptor. Asn86 and Asp101 together coordinate shikimate. Residues 125 to 129 (GSGGS) and Leu211 each bind NADP(+). Tyr213 is a binding site for shikimate. NADP(+) is bound at residue Gly234.

It belongs to the shikimate dehydrogenase family. In terms of assembly, homodimer.

It catalyses the reaction shikimate + NADP(+) = 3-dehydroshikimate + NADPH + H(+). It participates in metabolic intermediate biosynthesis; chorismate biosynthesis; chorismate from D-erythrose 4-phosphate and phosphoenolpyruvate: step 4/7. Functionally, involved in the biosynthesis of the chorismate, which leads to the biosynthesis of aromatic amino acids. Catalyzes the reversible NADPH linked reduction of 3-dehydroshikimate (DHSA) to yield shikimate (SA). This is Shikimate dehydrogenase (NADP(+)) from Clostridium botulinum (strain 657 / Type Ba4).